Reading from the N-terminus, the 512-residue chain is Vacuolar protein sorting-associated protein 30 (512 aa).

Residues 294-511 (TNIYNESFRI…LVFCSSKLSL (218 aa)) form a BARA region.

The protein belongs to the beclin family. In terms of assembly, component of the autophagy-specific VPS34 PI3-kinase complex I composed of VPS15, VPS30, VPS34, ATG14 and ATG38; and of the VPS34 PI3-kinase complex II composed of VPS15, VPS30, VPS34 and VPS38.

It is found in the endosome membrane. The protein resides in the vacuole membrane. It localises to the preautophagosomal structure membrane. Its function is as follows. Required for cytoplasm to vacuole transport (Cvt), autophagy, nucleophagy, and mitophagy, as a part of the autophagy-specific VPS34 PI3-kinase complex I. This complex is essential to recruit the ATG8-phosphatidylinositol conjugate and the ATG12-ATG5 conjugate to the pre-autophagosomal structure. Also involved in endosome-to-Golgi retrograde transport as part of the VPS34 PI3-kinase complex II. This second complex is required for the endosome-to-Golgi retrieval of PEP1 and KEX2, and the recruitment of VPS5 and VPS7, two components of the retromer complex, to endosomal membranes (probably through the synthesis of a specific pool of phosphatidylinositol 3-phosphate recruiting the retromer to the endosomes). Required for survival and/or proliferation in kidneys but not brain. The protein is Vacuolar protein sorting-associated protein 30 of Candida glabrata (strain ATCC 2001 / BCRC 20586 / JCM 3761 / NBRC 0622 / NRRL Y-65 / CBS 138) (Yeast).